We begin with the raw amino-acid sequence, 454 residues long: MELLKPNRSVLGSGPGPGASLCRSGGPLLNGSGTGNLSCEPPRIRGAGTRELELAIRVTLYAVIFLMSVGGNVLIIVVLGLSRRLRTVTNAFLLSLAVSDLLLAVACMPFTLLPNLMGTFIFGTVVCKAVSYFMGVSVSVSTLSLVAIALERYSAICRPLQARVWQTRSHAARVIVATWMLSGLLMVPYPVYTAVQPAGPRVLQCMHRWPSARVRQTWSVLLLLLLFFVPGVVMAVAYGLISRELYLGLRFDGDSDSESQSRVGSQGGLPGGTGQGPAQANGRCRSETRLAGEDGDGCYVQLPRSRPALEMSALTAPTPGPGSGTRPAQAKLLAKKRVVRMLLVIVVLFFLCWLPVYSANTWRAFDGPGAHRALSGAPISFIHLLTYASACVNPLVYCFMHRRFRQACLDTCTRCCPRPPRARPRPLPDEDPPTPSIASLSRLSYTTISTLGPG.

Over 1-57 (MELLKPNRSVLGSGPGPGASLCRSGGPLLNGSGTGNLSCEPPRIRGAGTRELELAIR) the chain is Extracellular. N-linked (GlcNAc...) asparagine glycosylation is found at Asn-7, Asn-30, and Asn-36. A helical membrane pass occupies residues 58–79 (VTLYAVIFLMSVGGNVLIIVVL). At 80–87 (GLSRRLRT) the chain is on the cytoplasmic side. The helical transmembrane segment at 88-109 (VTNAFLLSLAVSDLLLAVACMP) threads the bilayer. Residues 110 to 131 (FTLLPNLMGTFIFGTVVCKAVS) are Extracellular-facing. Cys-127 and Cys-205 form a disulfide bridge. Residues 132–150 (YFMGVSVSVSTLSLVAIAL) form a helical membrane-spanning segment. Over 151-170 (ERYSAICRPLQARVWQTRSH) the chain is Cytoplasmic. Residues 171–189 (AARVIVATWMLSGLLMVPY) traverse the membrane as a helical segment. Topologically, residues 190 to 219 (PVYTAVQPAGPRVLQCMHRWPSARVRQTWS) are extracellular. The helical transmembrane segment at 220-242 (VLLLLLLFFVPGVVMAVAYGLIS) threads the bilayer. Residues 243–340 (RELYLGLRFD…KLLAKKRVVR (98 aa)) are Cytoplasmic-facing. The tract at residues 257–284 (SESQSRVGSQGGLPGGTGQGPAQANGRC) is disordered. A compositionally biased stretch (gly residues) spans 265–275 (SQGGLPGGTGQ). The chain crosses the membrane as a helical span at residues 341–362 (MLLVIVVLFFLCWLPVYSANTW). The Extracellular portion of the chain corresponds to 363–380 (RAFDGPGAHRALSGAPIS). Residues 381–401 (FIHLLTYASACVNPLVYCFMH) traverse the membrane as a helical segment. Residues 402–454 (RRFRQACLDTCTRCCPRPPRARPRPLPDEDPPTPSIASLSRLSYTTISTLGPG) lie on the Cytoplasmic side of the membrane. Cys-415 carries S-palmitoyl cysteine lipidation. The segment at 422–441 (ARPRPLPDEDPPTPSIASLS) is disordered.

This sequence belongs to the G-protein coupled receptor 1 family.

The protein localises to the cell membrane. Receptor for gastrin and cholecystokinin. The CCK-B receptors occur throughout the central nervous system where they modulate anxiety, analgesia, arousal, and neuroleptic activity. This receptor mediates its action by association with G proteins that activate a phosphatidylinositol-calcium second messenger system. In Bos taurus (Bovine), this protein is Gastrin/cholecystokinin type B receptor (CCKBR).